We begin with the raw amino-acid sequence, 385 residues long: Odorant receptor 82a (385 aa).

The Cytoplasmic portion of the chain corresponds to 1 to 32; that stretch reads MGRLFQLQEYCLRAMGHKDDMDSTDSTALSLK. The helical transmembrane segment at 33-53 threads the bilayer; the sequence is HISSLIFVISAQYPLISYVAY. The Extracellular portion of the chain corresponds to 54 to 62; sequence NRNDMEKVT. The chain crosses the membrane as a helical span at residues 63–83; it reads ACLSVVFTNMLTVIKISTFLA. At 84–131 the chain is on the cytoplasmic side; it reads NRKDFWEMIHRFRKMHEQSASHIPRYREGLDYVAEANKLASFLGRAYC. Residues 132 to 152 form a helical membrane-spanning segment; that stretch reads VSCGLTGLYFMLGPIVKIGVC. The Extracellular portion of the chain corresponds to 153 to 186; sequence RWHGTTCDKELPMPMKFPFNDLESPGYEVCFLYT. A helical membrane pass occupies residues 187–207; that stretch reads VLVTVVVVAYASAVDGLFISF. The Cytoplasmic segment spans residues 208-257; that stretch reads AINLRAHFQTLQRQIENWEFPSSEPDTQIRLKSIVEYHVLLLSLSRKLRS. The chain crosses the membrane as a helical span at residues 258–278; that stretch reads IYTPTVMGQFVITSLQVGVII. The Extracellular portion of the chain corresponds to 279–290; it reads YQLVTNMDSVMD. A helical transmembrane segment spans residues 291–311; the sequence is LLLYASFFGSIMLQLFIYCYG. Topologically, residues 312-357 are cytoplasmic; it reads GEIIKAESLQVDTAVRLSNWHLASPKTRTSLSLIILQSQKEVLIRA. The helical transmembrane segment at 358 to 378 threads the bilayer; the sequence is GFFVASLANFVGICRTALSLI. At 379–385 the chain is on the extracellular side; sequence TLIKSIE.

Belongs to the insect chemoreceptor superfamily. Heteromeric odorant receptor channel (TC 1.A.69) family. Or1a subfamily. In terms of assembly, interacts with Orco. Complexes exist early in the endomembrane system in olfactory sensory neurons (OSNs), coupling these complexes to the conserved ciliary trafficking pathway. As to expression, expressed in olfactory sensory neurons in the antenna.

The protein localises to the cell membrane. Its function is as follows. Odorant receptor which mediates acceptance or avoidance behavior, depending on its substrates. The odorant receptor repertoire encodes a large collection of odor stimuli that vary widely in identity, intensity, and duration. May form a complex with Orco to form odorant-sensing units, providing sensitive and prolonged odorant signaling and calcium permeability. This is Odorant receptor 82a (Or82a) from Drosophila melanogaster (Fruit fly).